Consider the following 512-residue polypeptide: MESPSYKNLIKAEDAQKKAGKRLLSSEWYPGFHVTPLTGWMNDPNGLIFFKGEYHLFYQYYPFAPVWGPMHWGHAKSRDLVHWETLPVALAPGDSFDRDGCFSGCAVDNNGVLTLIYTGHIVLSNDSPDAIREVQCMATSIDGIHFQKEGIVLEKAPMPQVAHFRDPRVWKENDHWFMVVGYRTDDKKHQGIGHVALYRSENLKDWIFVKTLLGDNSQLPLGKRAFMWECPDFFSLGNRSVLMFSPQGLKASGYKNRNLFQNGYILGKWQAPQFTPETSFQELDYGHDFYAAQRFEAKDGRQILIAWFDMWENQKPSQRDGWAGCMTLPRKLDLIDNKIVMTPVREMEILRQSEKIESVVTLSDAEHPFTMDSPLQEIELIFDLEKSNAYQAGLALRCNGKGQETLLYIDRSQNRIILDRNRSGQNVKGIRSCPLPNTSKVRLHIFLDRSSIEIFVGDDQTQGLYSISSRIFPDKDSLKGRLFAIEGYAVFDSFKRWTLQDANLAAFSSDAC.

Residues 40–43 (WMND), Q59, W67, 102–103 (FS), 165–166 (RD), E229, and W311 each bind substrate. The active site involves D43.

This sequence belongs to the glycosyl hydrolase 32 family.

Its subcellular location is the cytoplasm. It carries out the reaction Hydrolysis of terminal non-reducing beta-D-fructofuranoside residues in beta-D-fructofuranosides.. It functions in the pathway glycan biosynthesis; sucrose metabolism. The sequence is that of Sucrose-6-phosphate hydrolase (sacA) from Zymomonas mobilis subsp. mobilis (strain ATCC 10988 / DSM 424 / LMG 404 / NCIMB 8938 / NRRL B-806 / ZM1).